Reading from the N-terminus, the 254-residue chain is 3-deoxy-manno-octulosonate cytidylyltransferase (254 aa).

This sequence belongs to the KdsB family.

It localises to the cytoplasm. It catalyses the reaction 3-deoxy-alpha-D-manno-oct-2-ulosonate + CTP = CMP-3-deoxy-beta-D-manno-octulosonate + diphosphate. It functions in the pathway nucleotide-sugar biosynthesis; CMP-3-deoxy-D-manno-octulosonate biosynthesis; CMP-3-deoxy-D-manno-octulosonate from 3-deoxy-D-manno-octulosonate and CTP: step 1/1. The protein operates within bacterial outer membrane biogenesis; lipopolysaccharide biosynthesis. Its function is as follows. Activates KDO (a required 8-carbon sugar) for incorporation into bacterial lipopolysaccharide in Gram-negative bacteria. This is 3-deoxy-manno-octulosonate cytidylyltransferase from Chlamydia felis (strain Fe/C-56) (Chlamydophila felis).